The following is a 240-amino-acid chain: Probable Ni/Fe-hydrogenase B-type cytochrome subunit (240 aa).

A run of 4 helical transmembrane segments spans residues 31-51 (LWHW…YFIG), 75-95 (FAAG…AFVG), 142-163 (LAMF…FALY), and 196-213 (LGMW…YLAV).

Belongs to the HupC/HyaC/HydC family.

The protein localises to the cell membrane. Its function is as follows. Probable b-type cytochrome. This is Probable Ni/Fe-hydrogenase B-type cytochrome subunit (hoxZ) from Azotobacter vinelandii.